The chain runs to 148 residues: Putative fusion protein (148 aa).

The disordered stretch occupies residues 1–34; it reads MDRALSTFPGDDDETNERNINHREKTSGEHGHYE. Residues 16–34 show a composition bias toward basic and acidic residues; that stretch reads NERNINHREKTSGEHGHYE.

This sequence belongs to the poxviruses fusion protein family. In terms of assembly, homotrimer, covalently linked.

Its subcellular location is the virion membrane. The chain is Putative fusion protein from Sheeppox virus (strain KS-1) (SPPV).